The following is a 557-amino-acid chain: Urocanate hydratase (557 aa).

Residues 1 to 20 (MSNPRHNEREVRSPRGDELN) form a disordered region. NAD(+) contacts are provided by residues 52-53 (GG), Q130, 176-178 (GMG), E196, R201, 242-243 (NA), 263-267 (QTSAH), 273-274 (YL), and Y322. C410 is an active-site residue. Position 492 (G492) interacts with NAD(+).

Belongs to the urocanase family. Requires NAD(+) as cofactor.

Its subcellular location is the cytoplasm. The enzyme catalyses 4-imidazolone-5-propanoate = trans-urocanate + H2O. It functions in the pathway amino-acid degradation; L-histidine degradation into L-glutamate; N-formimidoyl-L-glutamate from L-histidine: step 2/3. Functionally, catalyzes the conversion of urocanate to 4-imidazolone-5-propionate. The sequence is that of Urocanate hydratase from Brucella abortus (strain S19).